We begin with the raw amino-acid sequence, 522 residues long: 2-isopropylmalate synthase (522 aa).

One can recognise a Pyruvate carboxyltransferase domain in the interval 5–267 (VIIFDTTLRD…ETGINAKEIH (263 aa)). Residues aspartate 14, histidine 202, histidine 204, and asparagine 238 each contribute to the Mn(2+) site. The interval 392-522 (QLQQLVVQSD…MQKNRELGGV (131 aa)) is regulatory domain.

This sequence belongs to the alpha-IPM synthase/homocitrate synthase family. LeuA type 1 subfamily. Homodimer. The cofactor is Mn(2+).

The protein resides in the cytoplasm. It carries out the reaction 3-methyl-2-oxobutanoate + acetyl-CoA + H2O = (2S)-2-isopropylmalate + CoA + H(+). It participates in amino-acid biosynthesis; L-leucine biosynthesis; L-leucine from 3-methyl-2-oxobutanoate: step 1/4. Its function is as follows. Catalyzes the condensation of the acetyl group of acetyl-CoA with 3-methyl-2-oxobutanoate (2-ketoisovalerate) to form 3-carboxy-3-hydroxy-4-methylpentanoate (2-isopropylmalate). The polypeptide is 2-isopropylmalate synthase (Shewanella baltica (strain OS155 / ATCC BAA-1091)).